Consider the following 233-residue polypeptide: Orotidine 5'-phosphate decarboxylase (233 aa).

Substrate is bound by residues Asp11, Lys34, 61 to 70 (DLKLHDIPNT), Thr117, Arg179, Gln188, Gly208, and Arg209. Catalysis depends on Lys63, which acts as the Proton donor.

This sequence belongs to the OMP decarboxylase family. Type 1 subfamily. In terms of assembly, homodimer.

The catalysed reaction is orotidine 5'-phosphate + H(+) = UMP + CO2. It functions in the pathway pyrimidine metabolism; UMP biosynthesis via de novo pathway; UMP from orotate: step 2/2. Functionally, catalyzes the decarboxylation of orotidine 5'-monophosphate (OMP) to uridine 5'-monophosphate (UMP). This Streptococcus pneumoniae (strain P1031) protein is Orotidine 5'-phosphate decarboxylase.